Here is a 565-residue protein sequence, read N- to C-terminus: Proline--tRNA ligase (565 aa).

Belongs to the class-II aminoacyl-tRNA synthetase family. ProS type 1 subfamily. In terms of assembly, homodimer.

The protein resides in the cytoplasm. The enzyme catalyses tRNA(Pro) + L-proline + ATP = L-prolyl-tRNA(Pro) + AMP + diphosphate. In terms of biological role, catalyzes the attachment of proline to tRNA(Pro) in a two-step reaction: proline is first activated by ATP to form Pro-AMP and then transferred to the acceptor end of tRNA(Pro). As ProRS can inadvertently accommodate and process non-cognate amino acids such as alanine and cysteine, to avoid such errors it has two additional distinct editing activities against alanine. One activity is designated as 'pretransfer' editing and involves the tRNA(Pro)-independent hydrolysis of activated Ala-AMP. The other activity is designated 'posttransfer' editing and involves deacylation of mischarged Ala-tRNA(Pro). The misacylated Cys-tRNA(Pro) is not edited by ProRS. The polypeptide is Proline--tRNA ligase (Bacillus pumilus (strain SAFR-032)).